The primary structure comprises 475 residues: Ribulose bisphosphate carboxylase large chain (475 aa).

The propeptide occupies 1–2; it reads MS. Position 3 is an N-acetylproline (Pro3). Lys14 is subject to N6,N6,N6-trimethyllysine. Positions 123 and 173 each coordinate substrate. Lys175 functions as the Proton acceptor in the catalytic mechanism. Substrate is bound at residue Lys177. The Mg(2+) site is built by Lys201, Asp203, and Glu204. At Lys201 the chain carries N6-carboxylysine. His294 serves as the catalytic Proton acceptor. Positions 295, 327, and 379 each coordinate substrate.

It belongs to the RuBisCO large chain family. Type I subfamily. Heterohexadecamer of 8 large chains and 8 small chains; disulfide-linked. The disulfide link is formed within the large subunit homodimers. Mg(2+) serves as cofactor. The disulfide bond which can form in the large chain dimeric partners within the hexadecamer appears to be associated with oxidative stress and protein turnover.

The protein resides in the plastid. It localises to the chloroplast. It catalyses the reaction 2 (2R)-3-phosphoglycerate + 2 H(+) = D-ribulose 1,5-bisphosphate + CO2 + H2O. It carries out the reaction D-ribulose 1,5-bisphosphate + O2 = 2-phosphoglycolate + (2R)-3-phosphoglycerate + 2 H(+). Its function is as follows. RuBisCO catalyzes two reactions: the carboxylation of D-ribulose 1,5-bisphosphate, the primary event in carbon dioxide fixation, as well as the oxidative fragmentation of the pentose substrate in the photorespiration process. Both reactions occur simultaneously and in competition at the same active site. The polypeptide is Ribulose bisphosphate carboxylase large chain (Platanus occidentalis (Sycamore)).